Consider the following 225-residue polypeptide: 3-dehydroquinate dehydratase (225 aa).

Residues 30–32 and arginine 62 contribute to the 3-dehydroquinate site; that span reads EWR. The active-site Proton donor/acceptor is the histidine 118. Lysine 143 acts as the Schiff-base intermediate with substrate in catalysis. Residues arginine 186, serine 205, and glutamine 209 each contribute to the 3-dehydroquinate site.

It belongs to the type-I 3-dehydroquinase family. As to quaternary structure, homodimer.

It catalyses the reaction 3-dehydroquinate = 3-dehydroshikimate + H2O. It functions in the pathway metabolic intermediate biosynthesis; chorismate biosynthesis; chorismate from D-erythrose 4-phosphate and phosphoenolpyruvate: step 3/7. Functionally, involved in the third step of the chorismate pathway, which leads to the biosynthesis of aromatic amino acids. Catalyzes the cis-dehydration of 3-dehydroquinate (DHQ) and introduces the first double bond of the aromatic ring to yield 3-dehydroshikimate. The chain is 3-dehydroquinate dehydratase from Streptococcus thermophilus (strain ATCC BAA-250 / LMG 18311).